A 436-amino-acid chain; its full sequence is ATP-dependent protease ATPase subunit HslU (436 aa).

Residues Ile18, 60–65 (GVGKTE), Asp249, Glu314, and Arg386 each bind ATP.

The protein belongs to the ClpX chaperone family. HslU subfamily. In terms of assembly, a double ring-shaped homohexamer of HslV is capped on each side by a ring-shaped HslU homohexamer. The assembly of the HslU/HslV complex is dependent on binding of ATP.

Its subcellular location is the cytoplasm. Its function is as follows. ATPase subunit of a proteasome-like degradation complex; this subunit has chaperone activity. The binding of ATP and its subsequent hydrolysis by HslU are essential for unfolding of protein substrates subsequently hydrolyzed by HslV. HslU recognizes the N-terminal part of its protein substrates and unfolds these before they are guided to HslV for hydrolysis. The protein is ATP-dependent protease ATPase subunit HslU of Chelativorans sp. (strain BNC1).